The chain runs to 738 residues: DNA ligase (738 aa).

NAD(+) is bound by residues 48–52 (DVVYD), 97–98 (SL), and Glu-136. Residue Lys-138 is the N6-AMP-lysine intermediate of the active site. 4 residues coordinate NAD(+): Arg-159, Glu-196, Lys-356, and Lys-380. Cys-474, Cys-477, Cys-492, and Cys-497 together coordinate Zn(2+). One can recognise a BRCT domain in the interval 659 to 738 (QLPQPLAGKT…SQLLELLEET (80 aa)).

Belongs to the NAD-dependent DNA ligase family. LigA subfamily. The cofactor is Mg(2+). Mn(2+) serves as cofactor.

The catalysed reaction is NAD(+) + (deoxyribonucleotide)n-3'-hydroxyl + 5'-phospho-(deoxyribonucleotide)m = (deoxyribonucleotide)n+m + AMP + beta-nicotinamide D-nucleotide.. In terms of biological role, DNA ligase that catalyzes the formation of phosphodiester linkages between 5'-phosphoryl and 3'-hydroxyl groups in double-stranded DNA using NAD as a coenzyme and as the energy source for the reaction. It is essential for DNA replication and repair of damaged DNA. This Cyanothece sp. (strain PCC 7425 / ATCC 29141) protein is DNA ligase.